Here is a 34-residue protein sequence, read N- to C-terminus: Photosystem II reaction center protein M (34 aa).

The chain crosses the membrane as a helical span at residues 7–27 (GFVATLLFVLVPAIFLIILYI).

The protein belongs to the PsbM family. PSII is composed of 1 copy each of membrane proteins PsbA, PsbB, PsbC, PsbD, PsbE, PsbF, PsbH, PsbI, PsbJ, PsbK, PsbL, PsbM, PsbT, PsbX, PsbY, PsbZ, Psb30/Ycf12, peripheral proteins PsbO, CyanoQ (PsbQ), PsbU, PsbV and a large number of cofactors. It forms dimeric complexes.

Its subcellular location is the cellular thylakoid membrane. In terms of biological role, one of the components of the core complex of photosystem II (PSII). PSII is a light-driven water:plastoquinone oxidoreductase that uses light energy to abstract electrons from H(2)O, generating O(2) and a proton gradient subsequently used for ATP formation. It consists of a core antenna complex that captures photons, and an electron transfer chain that converts photonic excitation into a charge separation. This subunit is found at the monomer-monomer interface. This is Photosystem II reaction center protein M from Synechococcus sp. (strain RCC307).